The sequence spans 815 residues: SNF1 protein kinase subunit beta-1 (815 aa).

Polar residues predominate over residues 1–11 (MGNSPSTQDPS). Disordered stretches follow at residues 1 to 88 (MGNS…TIDK) and 117 to 148 (SDDHDVGAPEEQVKSPSFLSPGPSMATVKQTK). The N-myristoyl glycine moiety is linked to residue Gly2. The span at 12 to 31 (HSTKKEHGHHFHDAFNKDRQ) shows a compositional bias: basic and acidic residues. Positions 32-42 (GSITSQLFNNR) are enriched in polar residues. A Phosphoserine modification is found at Ser33. Composition is skewed to basic and acidic residues over residues 72-88 (PSTDCDGRMSSDTTIDK) and 117-129 (SDDHDVGAPEEQV). Phosphoserine occurs at positions 181, 198, 200, 206, 209, and 220. 3 disordered regions span residues 310 to 335 (SHANNNGNIENNTRNKGNAGGSNDDF), 363 to 389 (HQNKTKKAQNKKIRSASNSRRSSFASL), and 410 to 444 (PLHPIINDNESQYSAPQHREISHHSNSMSSMSSIS). Over residues 313–326 (NNNGNIENNTRNKG) the composition is skewed to low complexity. Ser331 carries the post-translational modification Phosphoserine. Over residues 363–376 (HQNKTKKAQNKKIR) the composition is skewed to basic residues. 2 stretches are compositionally biased toward low complexity: residues 377-389 (SASNSRRSSFASL) and 433-444 (HSNSMSSMSSIS). Residues 473–716 (VSTDIASALK…LQQGGNIDAE (244 aa)) are kinase-interacting sequence (KIS); required for interaction with SNF1. Ser494 and Ser497 each carry phosphoserine. A disordered region spans residues 583–616 (TLDEELPKRPELKRFPSSSRKSSYYSAKGVERPS). Basic and acidic residues predominate over residues 587–596 (ELPKRPELKR). The segment covering 599–608 (SSSRKSSYYS) has biased composition (low complexity). Phosphoserine is present on Ser643. The association with SNF1 kinase complex (ASC) domain; required for interaction with SNF4 stretch occupies residues 724 to 804 (SRYPVPDLPI…FITQVVYAPC (81 aa)).

It belongs to the 5'-AMP-activated protein kinase beta subunit family. As to quaternary structure, component of the SNF1 kinase complex, a heterotrimeric complex composed of the catalytic alpha subunit SNF1, one of the three related beta subunits SIP1, SIP2 or GAL83, and the regulatory gamma subunit SNF4. The beta subunit serves as a bridge between the catalytic and the regulatory subunit. Interacts (via KIS domain) with SNF1. Interacts (via ASC domain) with SNF4. Post-translationally, phosphorylated by SNF1 in vitro.

It is found in the cytoplasm. It localises to the vacuole membrane. Functionally, beta subunit of the SNF1 kinase complex, which is required for transcriptional, metabolic, and developmental adaptations in response to glucose limitation. Has a structural role, mediating heterotrimer formation, and a regulatory role, defining carbon source-regulated subcellular location and substrate specificity of the SNF1 kinase complex. Promotes the PKA-regulated relocalization of the SNF1 kinase complex to the vacuolar membrane in response to various types of carbon stress. The polypeptide is SNF1 protein kinase subunit beta-1 (SIP1) (Saccharomyces cerevisiae (strain YJM789) (Baker's yeast)).